Reading from the N-terminus, the 453-residue chain is tRNA modification GTPase MnmE (453 aa).

Residues Arg-22, Glu-79, and Lys-119 each contribute to the (6S)-5-formyl-5,6,7,8-tetrahydrofolate site. The TrmE-type G domain maps to Gly-215–Gly-376. Asn-225 lines the K(+) pocket. Residues Asn-225–Ser-230, Thr-244–Thr-250, Asp-269–Gly-272, and Asn-334–Asp-337 each bind GTP. Ser-229 contacts Mg(2+). K(+) is bound by residues Thr-244, Ile-246, and Thr-249. A Mg(2+)-binding site is contributed by Thr-250. Lys-453 is a (6S)-5-formyl-5,6,7,8-tetrahydrofolate binding site.

Belongs to the TRAFAC class TrmE-Era-EngA-EngB-Septin-like GTPase superfamily. TrmE GTPase family. As to quaternary structure, homodimer. Heterotetramer of two MnmE and two MnmG subunits. It depends on K(+) as a cofactor.

It is found in the cytoplasm. Exhibits a very high intrinsic GTPase hydrolysis rate. Involved in the addition of a carboxymethylaminomethyl (cmnm) group at the wobble position (U34) of certain tRNAs, forming tRNA-cmnm(5)s(2)U34. This chain is tRNA modification GTPase MnmE, found in Shewanella halifaxensis (strain HAW-EB4).